The chain runs to 142 residues: Protein CPn_0742/CP_0003/CPj0742/CpB0770 (142 aa).

The interval 115-142 (LHPTKESKRPKQKLSSTKKNKKKNWIPL) is disordered. Positions 124–142 (PKQKLSSTKKNKKKNWIPL) are enriched in basic residues.

Belongs to the chlamydial CPn_0742/CT_635/TC_0003 family.

This Chlamydia pneumoniae (Chlamydophila pneumoniae) protein is Protein CPn_0742/CP_0003/CPj0742/CpB0770.